Consider the following 1216-residue polypeptide: Probable phospholipid-transporting ATPase 4 (1216 aa).

Over 1-74 the chain is Cytoplasmic; it reads MARGRIRSKL…TTRYNLITFF (74 aa). A helical membrane pass occupies residues 75-96; it reads PKCLYEQFHRAANFYFLVAAIL. Residues 97–100 are Extracellular-facing; the sequence is SVFP. A helical transmembrane segment spans residues 101 to 123; sequence LSPFNKWSMIAPLVFVVGLSMLK. Topologically, residues 124 to 305 are cytoplasmic; it reads EALEDWSRFM…SRIEKTMDYI (182 aa). A helical transmembrane segment spans residues 306 to 327; the sequence is IYTLLVLLILISCISSSGFAWE. Residues 328-359 lie on the Extracellular side of the membrane; the sequence is TKFHMPKWWYLRPEEPENLTNPSNPVYAGFVH. A helical transmembrane segment spans residues 360 to 377; sequence LITALLLYGYLIPISLYV. Residues 378 to 922 are Cytoplasmic-facing; that stretch reads SIEVVKVLQA…HGHWCYKRIA (545 aa). The active-site 4-aspartylphosphate intermediate is Asp425. Lys605 is covalently cross-linked (Glycyl lysine isopeptide (Lys-Gly) (interchain with G-Cter in ubiquitin)). The Mg(2+) site is built by Asp867 and Asp871. Residues 923–942 form a helical membrane-spanning segment; it reads QMICYFFYKNIAFGLTLFYF. Residues 943–956 lie on the Extracellular side of the membrane; sequence EAFTGFSGQSVYND. The helical transmembrane segment at 957–976 threads the bilayer; the sequence is YYLLLFNVVLTSLPVIALGV. Residues 977-1006 lie on the Cytoplasmic side of the membrane; it reads FEQDVSSEICLQFPALYQQGKKNLFFDWYR. The helical transmembrane segment at 1007 to 1029 threads the bilayer; it reads ILGWMGNGVYSSLVIFFLNIGII. Residues 1030 to 1042 lie on the Extracellular side of the membrane; sequence YEQAFRVSGQTAD. A helical membrane pass occupies residues 1043–1065; it reads MDAVGTTMFTCIIWAVNVQIALT. Over 1066–1071 the chain is Cytoplasmic; sequence VSHFTW. Residues 1072-1092 form a helical membrane-spanning segment; the sequence is IQHVLIWGSIGLWYLFVALYG. Residues 1093-1109 are Extracellular-facing; the sequence is MMPPSLSGNIYRILVEI. A helical membrane pass occupies residues 1110–1134; the sequence is LAPAPIYWIATFLVTVTTVLPYFAH. Residues 1135 to 1216 lie on the Cytoplasmic side of the membrane; it reads ISFQRFLHPL…TQDTMSPRSV (82 aa). The interval 1195 to 1216 is disordered; it reads LNKKQSNMSQFSTQDTMSPRSV. Residues 1198–1216 show a composition bias toward polar residues; sequence KQSNMSQFSTQDTMSPRSV.

It belongs to the cation transport ATPase (P-type) (TC 3.A.3) family. Type IV subfamily.

It is found in the membrane. It carries out the reaction ATP + H2O + phospholipidSide 1 = ADP + phosphate + phospholipidSide 2.. Its function is as follows. Involved in transport of phospholipids. The polypeptide is Probable phospholipid-transporting ATPase 4 (Arabidopsis thaliana (Mouse-ear cress)).